The chain runs to 53 residues: Lantibiotic mutacin-2 (53 aa).

Residues 1-26 (MNKLNSNAVVSLNEVSDSELDTILGG) constitute a propeptide that is removed on maturation. Positions 36-41 (TVSYEC) form a cross-link, beta-methyllanthionine (Thr-Cys). Cross-links (lanthionine (Ser-Cys)) lie at residues 38–52 (SYEC…VFTC) and 45–53 (SWQHVFTCC). Residue Thr-51 is modified to 2,3-didehydrobutyrine.

In terms of processing, maturation of lantibiotics involves the enzymatic conversion of Thr, and Ser into dehydrated AA and the formation of thioether bonds with cysteine. This is followed by membrane translocation and cleavage of the modified precursor. It is not established whether the 2,3-didehydrobutyrine is the E- or Z-isomer.

In terms of biological role, lanthionine-containing peptide antibiotic (lantibiotic) active on Gram-positive bacteria including M.luteus, S.aureus, Streptococcus, P.micros, P.acidilactici, C.sporogenes, C.diphtheriae, A.viscosus, G.vaginalis, P.acnes, L.monocytogenes and M.smegmatis, and Gram-negative bacteria including C.jejuni, H.pylori and N.gonorrhoeae. Transiently and partially depolarizes the transmembrane electrical potential and pH gradient of susceptible cells, inhibits the uptake of amino acids and depletes the intracellular ATP pool. The polypeptide is Lantibiotic mutacin-2 (Streptococcus mutans).